We begin with the raw amino-acid sequence, 396 residues long: Phosphoglycerate kinase (396 aa).

Residues 21-23, Arg36, 59-62, Arg119, and Arg156 each bind substrate; these read DFN and HLGK. Residues Lys206, Glu325, and 352–355 contribute to the ATP site; that span reads GGDS.

The protein belongs to the phosphoglycerate kinase family. As to quaternary structure, monomer.

It is found in the cytoplasm. It carries out the reaction (2R)-3-phosphoglycerate + ATP = (2R)-3-phospho-glyceroyl phosphate + ADP. The protein operates within carbohydrate degradation; glycolysis; pyruvate from D-glyceraldehyde 3-phosphate: step 2/5. This is Phosphoglycerate kinase from Staphylococcus epidermidis (strain ATCC 35984 / DSM 28319 / BCRC 17069 / CCUG 31568 / BM 3577 / RP62A).